The sequence spans 305 residues: RNA-binding protein with serine-rich domain 1 (305 aa).

Over residues 1–10 (MDLSGVKKKS) the composition is skewed to basic residues. Positions 1 to 161 (MDLSGVKKKS…KRRSPSPKPT (161 aa)) are necessary for interaction with SRP54, nuclear localization and exon-skipping. The tract at residues 1 to 170 (MDLSGVKKKS…TKVHIGRLTR (170 aa)) is disordered. A necessary for interaction with the cleaved p110 isoform of CDC2L1 region spans residues 1-220 (MDLSGVKKKS…ENPDEAEKAL (220 aa)). Glycyl lysine isopeptide (Lys-Gly) (interchain with G-Cter in SUMO2) cross-links involve residues Lys7 and Lys15. The segment covering 33–59 (DRSDEKSKDRSKDKGTTKESSEKDRGR) has biased composition (basic and acidic residues). Ser53 bears the Phosphoserine mark. The segment covering 68–126 (ASSGSSSTRSRSSSTSSSGSSTSTGSSSGSSSSSASSRSGSSSTSRSSSSSSSSGSPSP) has biased composition (low complexity). Residues 69–121 (SSGSSSTRSRSSSTSSSGSSTSTGSSSGSSSSSASSRSGSSSTSRSSSSSSSS) are necessary for interactions with UPF2 and UPF3B and UPF2-dependent NMD. Composition is skewed to basic residues over residues 127–143 (SRRR…KSKP) and 151–167 (RKRR…HIGR). 2 positions are modified to phosphoserine: Ser155 and Ser157. The tract at residues 156 to 242 (PSPKPTKVHI…ITATAVLAPW (87 aa)) is necessary for interaction with PNN and exon-skipping. An interaction with SAP18 and ACIN1 region spans residues 159–244 (KPTKVHIGRL…ATAVLAPWPR (86 aa)). Thr161 is subject to Phosphothreonine. Residues 161–240 (TKVHIGRLTR…QEITATAVLA (80 aa)) form the RRM domain. Lys218 carries the post-translational modification N6-acetyllysine. Residues 238 to 305 (VLAPWPRPPP…RSRSSSNSSR (68 aa)) form a necessary for interaction with TRA2B, nuclear localization and exon-skipping region. Residues 240–305 (APWPRPPPRR…RSRSSSNSSR (66 aa)) form a disordered region. A compositionally biased stretch (pro residues) spans 242 to 262 (WPRPPPRRFSPPRRMLPPPPM). Over residues 266–298 (SPPRMRRRSRSPRRRSPVRRRSRSPGRRRHRSR) the composition is skewed to basic residues.

Belongs to the splicing factor SR family. As to quaternary structure, found in mRNA splicing-dependent exon junction complexes (EJC). Found in a post-splicing complex with NXF1, RBM8A, UPF1, UPF2, UPF3A, UPF3B and RNPS1. Component of the heterotrimeric ASAP (apoptosis- and splicing-associated protein) and PSAP complexes consisting of RNPS1, SAP18 and either ACIN1 or PNN, respectively; the ASAP and PSAP complexes probably are formed mutually exclusive. Component of the active spliceosome. Associates with polysomes. Interacts with the cleaved p110 isoform of CDC2L1, CSNK2A1, PNN, SART3, SRP54, SRRM1 and TRA2B/SFRS10. Phosphorylated on one or more of the four Ser/Thr residues (Ser-43, Thr-49, Ser-52 or Ser-53). Ser-53 phosphorylation site is important for splicing and translation stimulation activity in vitro.

It is found in the nucleus. Its subcellular location is the nucleus speckle. The protein localises to the cytoplasm. Its function is as follows. Part of pre- and post-splicing multiprotein mRNP complexes. Auxiliary component of the splicing-dependent multiprotein exon junction complex (EJC) deposited at splice junction on mRNAs. The EJC is a dynamic structure consisting of core proteins and several peripheral nuclear and cytoplasmic associated factors that join the complex only transiently either during EJC assembly or during subsequent mRNA metabolism. Component of the ASAP and PSAP complexes which bind RNA in a sequence-independent manner and are proposed to be recruited to the EJC prior to or during the splicing process and to regulate specific excision of introns in specific transcription subsets. The ASAP complex can inhibit RNA processing during in vitro splicing reactions. The ASAP complex promotes apoptosis and is disassembled after induction of apoptosis. Enhances the formation of the ATP-dependent A complex of the spliceosome. Involved in both constitutive splicing and, in association with SRP54 and TRA2B/SFRS10, in distinctive modulation of alternative splicing in a substrate-dependent manner. Involved in the splicing modulation of BCL2L1/Bcl-X (and probably other apoptotic genes); specifically inhibits formation of proapoptotic isoforms such as Bcl-X(S); the activity is different from the established EJC assembly and function. Participates in mRNA 3'-end cleavage. Involved in UPF2-dependent nonsense-mediated decay (NMD) of mRNAs containing premature stop codons. Also mediates increase of mRNA abundance and translational efficiency. Binds spliced mRNA 20-25 nt upstream of exon-exon junctions. This chain is RNA-binding protein with serine-rich domain 1 (Rnps1), found in Rattus norvegicus (Rat).